The primary structure comprises 260 residues: uncharacterized protein (260 aa).

The signal sequence occupies residues 1–22; that stretch reads MGYLKRFALYISILVLIVMVAG. Cysteine 23 carries the N-palmitoyl cysteine lipid modification. Cysteine 23 carries the S-diacylglycerol cysteine lipid modification.

Belongs to the staphylococcal tandem lipoprotein family.

It is found in the cell membrane. This is an uncharacterized protein from Staphylococcus aureus (strain bovine RF122 / ET3-1).